Here is a 97-residue protein sequence, read N- to C-terminus: Acylphosphatase (97 aa).

The Acylphosphatase-like domain maps to 11-97 (TYYVRVRGTV…EKRYERFEQH (87 aa)). Residues Arg-26 and Asn-44 contribute to the active site. A disordered region spans residues 76 to 97 (RVTEVSGEERSTEKRYERFEQH). Residues 82–97 (GEERSTEKRYERFEQH) are compositionally biased toward basic and acidic residues.

The protein belongs to the acylphosphatase family.

The enzyme catalyses an acyl phosphate + H2O = a carboxylate + phosphate + H(+). The polypeptide is Acylphosphatase (acyP) (Paraburkholderia xenovorans (strain LB400)).